The chain runs to 345 residues: Phosphoribosylformylglycinamidine cyclo-ligase (345 aa).

It belongs to the AIR synthase family.

It localises to the cytoplasm. The enzyme catalyses 2-formamido-N(1)-(5-O-phospho-beta-D-ribosyl)acetamidine + ATP = 5-amino-1-(5-phospho-beta-D-ribosyl)imidazole + ADP + phosphate + H(+). It participates in purine metabolism; IMP biosynthesis via de novo pathway; 5-amino-1-(5-phospho-D-ribosyl)imidazole from N(2)-formyl-N(1)-(5-phospho-D-ribosyl)glycinamide: step 2/2. The polypeptide is Phosphoribosylformylglycinamidine cyclo-ligase (Escherichia coli (strain K12 / MC4100 / BW2952)).